The chain runs to 787 residues: Pyridoxal-dependent decarboxylase domain-containing protein 1 (787 aa).

Positions 29 to 41 (EDSQRRTEEENGK) are enriched in basic and acidic residues. The disordered stretch occupies residues 29 to 52 (EDSQRRTEEENGKKLLSGDIPGPL). At S653 the chain carries Phosphoserine. The tract at residues 683 to 787 (QGSGVTPPQT…PQVEEPESLR (105 aa)) is disordered. Polar residues predominate over residues 685–697 (SGVTPPQTPTGTR). T688 and T692 each carry phosphothreonine. Phosphoserine occurs at positions 711, 719, and 723. The span at 735 to 745 (QSSGGQEASEA) shows a compositional bias: polar residues. Phosphoserine is present on residues S747 and S785. A compositionally biased stretch (basic and acidic residues) spans 774–787 (QDDRPQVEEPESLR).

It belongs to the group II decarboxylase family. It depends on pyridoxal 5'-phosphate as a cofactor.

The polypeptide is Pyridoxal-dependent decarboxylase domain-containing protein 1 (PDXDC1) (Bos taurus (Bovine)).